The primary structure comprises 476 residues: Adenosylhomocysteinase (476 aa).

Substrate contacts are provided by T67, D142, and E202. 203–205 provides a ligand contact to NAD(+); it reads TTT. Substrate-binding residues include K232 and D236. Residues N237, 266–271, E289, N324, 345–347, and N390 contribute to the NAD(+) site; these read GYGDVG and IGH.

The protein belongs to the adenosylhomocysteinase family. Requires NAD(+) as cofactor.

It localises to the cytoplasm. The catalysed reaction is S-adenosyl-L-homocysteine + H2O = L-homocysteine + adenosine. Its pathway is amino-acid biosynthesis; L-homocysteine biosynthesis; L-homocysteine from S-adenosyl-L-homocysteine: step 1/1. In terms of biological role, may play a key role in the regulation of the intracellular concentration of adenosylhomocysteine. The polypeptide is Adenosylhomocysteinase (Parasynechococcus marenigrum (strain WH8102)).